Reading from the N-terminus, the 72-residue chain is Small proline-rich protein 2D (72 aa).

The span at 1–11 shows a compositional bias: low complexity; sequence MSYQQQQCKQP. Positions 1–20 are disordered; the sequence is MSYQQQQCKQPCQPPPVCPT. Repeat copies occupy residues 21–29, 30–38, and 39–47. Residues 21–47 are 3 X 9 AA tandem repeats of P-K-C-P-[EQ]-P-C-P-[PS]; that stretch reads PKCPEPCPPPKCPEPCPSPKCPQPCPP. 2 stretches are compositionally biased toward pro residues: residues 33-47 and 56-72; these read PEPC…PCPP and PVTP…PKSK. The tract at residues 33–72 is disordered; that stretch reads PEPCPSPKCPQPCPPQQCQQKYPPVTPSPPCQPKCPPKSK.

It belongs to the cornifin (SPRR) family.

It localises to the cytoplasm. Its function is as follows. Cross-linked envelope protein of keratinocytes. It is a keratinocyte protein that first appears in the cell cytosol, but ultimately becomes cross-linked to membrane proteins by transglutaminase. All that results in the formation of an insoluble envelope beneath the plasma membrane. This Homo sapiens (Human) protein is Small proline-rich protein 2D (SPRR2D).